A 588-amino-acid polypeptide reads, in one-letter code: Dual specificity tyrosine-phosphorylation-regulated kinase 3 (588 aa).

Positions 1–188 (MGGTARGPGR…HGVIGGPNNG (188 aa)) are disordered. The segment covering 97–134 (SNTIQSDGISDSEKCSPTVSQGKSSDCLNTVKSNSSSK) has biased composition (polar residues). A Protein kinase domain is found at 209-522 (YEVLKIIGKG…PAQALRHPWI (314 aa)). ATP contacts are provided by residues 215-223 (IGKGSFGQV), Lys-238, and 288-291 (FELL). Asp-335 acts as the Proton acceptor in catalysis. Ser-350 carries the post-translational modification Phosphoserine. Tyr-369 carries the phosphotyrosine modification. Residues 468–481 (RSRRGKKRGPPGSK) carry the Nuclear localization signal motif.

This sequence belongs to the protein kinase superfamily. CMGC Ser/Thr protein kinase family. MNB/DYRK subfamily. Interacts with SIRT1. Requires Mg(2+) as cofactor. In terms of processing, ubiquitinated at anaphase by the anaphase-promoting complex (APC/C), leading to its degradation by the proteasome. Post-translationally, protein kinase activity is activated following autophosphorylation at Tyr-369. Autophosphorylation at Ser-350 stabilizes the protein and enhances the protein kinase activity. In terms of tissue distribution, isoform 1: Highly expressed in testis and in hematopoietic tissue such as fetal liver, and bone marrow. Isoform 1: Predominant form in fetal liver and bone marrow. Isoform 1: Present at low levels in heart, pancreas, lymph node and thymus. Isoform 2: Highly expressed in testis and in hematopoietic tissue such as fetal liver, and bone marrow. Isoform 2: Predominant form in testis. Isoform 2: Present at low levels in heart, pancreas, lymph node and thymus.

Its subcellular location is the nucleus. It is found in the cytoplasm. The protein localises to the nucleus speckle. It localises to the cytoplasmic granule. The protein resides in the cytoskeleton. Its subcellular location is the microtubule organizing center. It is found in the centrosome. The catalysed reaction is L-seryl-[protein] + ATP = O-phospho-L-seryl-[protein] + ADP + H(+). The enzyme catalyses L-threonyl-[protein] + ATP = O-phospho-L-threonyl-[protein] + ADP + H(+). It carries out the reaction L-tyrosyl-[protein] + ATP = O-phospho-L-tyrosyl-[protein] + ADP + H(+). Its activity is regulated as follows. Protein kinase activity is activated following autophosphorylation at Tyr-369. Inhibited by harmine, an ATP competitive inhibitor. Inhibited by small-compound GSK-626616. Functionally, dual-specificity protein kinase that promotes disassembly of several types of membraneless organelles during mitosis, such as stress granules, nuclear speckles and pericentriolar material. Dual-specificity tyrosine-regulated kinases (DYRKs) autophosphorylate a critical tyrosine residue in their activation loop and phosphorylate their substrate on serine and threonine residues. Acts as a central dissolvase of membraneless organelles during the G2-to-M transition, after the nuclear-envelope breakdown: acts by mediating phosphorylation of multiple serine and threonine residues in unstructured domains of proteins, such as SRRM1 and PCM1. Does not mediate disassembly of all membraneless organelles: disassembly of P-body and nucleolus is not regulated by DYRK3. Dissolution of membraneless organelles at the onset of mitosis is also required to release mitotic regulators, such as ZNF207, from liquid-unmixed organelles where they are sequestered and keep them dissolved during mitosis. Regulates mTORC1 by mediating the dissolution of stress granules: during stressful conditions, DYRK3 partitions from the cytosol to the stress granule, together with mTORC1 components, which prevents mTORC1 signaling. When stress signals are gone, the kinase activity of DYRK3 is required for the dissolution of stress granule and mTORC1 relocation to the cytosol: acts by mediating the phosphorylation of the mTORC1 inhibitor AKT1S1, allowing full reactivation of mTORC1 signaling. Also acts as a negative regulator of EPO-dependent erythropoiesis: may place an upper limit on red cell production during stress erythropoiesis. Inhibits cell death due to cytokine withdrawal in hematopoietic progenitor cells. Promotes cell survival upon genotoxic stress through phosphorylation of SIRT1: this in turn inhibits p53/TP53 activity and apoptosis. In Homo sapiens (Human), this protein is Dual specificity tyrosine-phosphorylation-regulated kinase 3.